A 584-amino-acid chain; its full sequence is Zinc finger and BTB domain-containing protein 7A (584 aa).

In terms of domain architecture, BTB spans 34 to 101 (CDVVILVEGR…AYTATLTVST (68 aa)). The interval 220 to 313 (YGPGPPAERP…EDGDGPDVDG (94 aa)) is disordered. Residues 277–584 (EEEAASLSEA…TDGNFTAGLA (308 aa)) form a mediates interaction with KHDRBS1 region. The segment covering 281–290 (ASLSEAAPEP) has biased composition (low complexity). A phosphoserine mark is found at serine 337 and serine 341. The mediates interaction with RELA stretch occupies residues 349–584 (MDYYLKYFSG…TDGNFTAGLA (236 aa)). The segment at 377-584 (RAKAFQKCPI…TDGNFTAGLA (208 aa)) is mediates interaction with SMAD4. C2H2-type zinc fingers lie at residues 382–404 (QKCP…IRTH) and 410–432 (YECN…MRKH). A Glycyl lysine isopeptide (Lys-Gly) (interchain with G-Cter in SUMO2) cross-link involves residue lysine 436. Residues 438–460 (YLCQQCGAAFAHNYDLKNHMRVH) form a C2H2-type 3 zinc finger. The C2H2-type 4; atypical zinc-finger motif lies at 466-490 (YQCDSCCKTFVRSDHLHRHLKKDGC). Positions 486-584 (KKDGCNGVPS…TDGNFTAGLA (99 aa)) are disordered. The segment covering 505 to 527 (GGAPDPSPGATATPGAPAQPSSP) has biased composition (low complexity). Phosphoserine occurs at positions 511, 525, and 526. The segment covering 528–540 (DARRNGQEKHFKD) has biased composition (basic and acidic residues). Residue lysine 539 forms a Glycyl lysine isopeptide (Lys-Gly) (interchain with G-Cter in SUMO2) linkage. Serine 549 carries the phosphoserine modification. Over residues 560–572 (GAGGGGDSGGGPG) the composition is skewed to gly residues.

In terms of assembly, homodimer. Interacts with BCL6. Interacts with RELA; involved in the control by RELA of the accessibility of target gene promoters. Interacts with AR (via NR LBD domain); the interaction is direct and androgen-dependent. Interacts with NCOR1. Interacts with NCOR2. Interacts with SMAD4; the interaction is direct and stimulated by TGFB1. Interacts with HDAC1. Interacts with SP1; ZBTB7A prevents the binding to GC-rich motifs in promoters and represses the transcriptional activity of SP1. Interacts with the DNA-dependent protein kinase complex/DNA-PKc. Interacts with KHDRBS1; negatively regulates KHDRBS1 splicing activity. Post-translationally, sumoylated. Undergoes sumoylation with SUMO1 that may regulate its transcriptional activity. Widely expressed. In normal thymus, expressed in medullary epithelial cells and Hassle's corpuscles (at protein level). In tonsil, expressed in squamous epithelium and germinal center lymphocytes (at protein level). Up-regulated in a subset of lymphomas, as well as in a subset of breast, lung, colon, prostate and bladder carcinomas (at protein level). Expressed in adipose tissues.

The protein resides in the nucleus. In terms of biological role, transcription factor that represses the transcription of a wide range of genes involved in cell proliferation and differentiation. Directly and specifically binds to the consensus sequence 5'-[GA][CA]GACCCCCCCCC-3' and represses transcription both by regulating the organization of chromatin and through the direct recruitment of transcription factors to gene regulatory regions. Negatively regulates SMAD4 transcriptional activity in the TGF-beta signaling pathway through these two mechanisms. That is, recruits the chromatin regulator HDAC1 to the SMAD4-DNA complex and in parallel prevents the recruitment of the transcriptional activators CREBBP and EP300. Collaborates with transcription factors like RELA to modify the accessibility of gene transcription regulatory regions to secondary transcription factors. Also directly interacts with transcription factors like SP1 to prevent their binding to DNA. Functions as an androgen receptor/AR transcriptional corepressor by recruiting NCOR1 and NCOR2 to the androgen response elements/ARE on target genes. Thereby, negatively regulates androgen receptor signaling and androgen-induced cell proliferation. Involved in the switch between fetal and adult globin expression during erythroid cells maturation. Through its interaction with the NuRD complex regulates chromatin at the fetal globin genes to repress their transcription. Specifically represses the transcription of the tumor suppressor ARF isoform from the CDKN2A gene. Efficiently abrogates E2F1-dependent CDKN2A transactivation. Regulates chondrogenesis through the transcriptional repression of specific genes via a mechanism that also requires histone deacetylation. Regulates cell proliferation through the transcriptional regulation of genes involved in glycolysis. Involved in adipogenesis through the regulation of genes involved in adipocyte differentiation. Plays a key role in the differentiation of lymphoid progenitors into B and T lineages. Promotes differentiation towards the B lineage by inhibiting the T-cell instructive Notch signaling pathway through the specific transcriptional repression of Notch downstream target genes. Also regulates osteoclast differentiation. May also play a role, independently of its transcriptional activity, in double-strand break repair via classical non-homologous end joining/cNHEJ. Recruited to double-strand break sites on damage DNA, interacts with the DNA-dependent protein kinase complex and directly regulates its stability and activity in DNA repair. May also modulate the splicing activity of KHDRBS1 toward BCL2L1 in a mechanism which is histone deacetylase-dependent and thereby negatively regulates the pro-apoptotic effect of KHDRBS1. The chain is Zinc finger and BTB domain-containing protein 7A from Homo sapiens (Human).